The primary structure comprises 481 residues: MSRALMIQGTGSNVGKSMLAAGLCRIARNRGLSVAPFKPQNMSNNAAVTADGGEIGRAQALQAMACGLEPHTDMNPVLLKPETETGSQVVVQGKRFTTVRARDYAKLKPQLMQAVLDSFKRLKAAHDLVIVEGAGSPAEVNLRNGDIANMGFAQASGTPVVLCGDIDRGGVIAQIVGTQAVMSAEDVALVRGFMINKFRGDPSLFDDGYKLIEQHTGWQGFGVIPWFADAGNLPAEDALDITTRTRDTGLHIVCLRLSRIANFDDMDPLAQEPGVRLTMLNAGEAIPGDADMVIIPGSKSTRGDLAYLRAQGWDLDLRAHLRRGGHVLGICGGYQMLGGSVADPEGVEGPAGTDEGLGLLDVETVMTGDKRLTRVAAIHAPSGTAFNGYEIHIGRTSGPDAARPFAVVNGQPEGAISGDGRVSGSYLHGMFRDDAFRAAWLAQFGVAQSVSYDATVQATLDALAAHLEGVMDIDALLDVRL.

The GATase cobBQ-type domain occupies 249–436 (GLHIVCLRLS…LHGMFRDDAF (188 aa)). Cys331 (nucleophile) is an active-site residue. The active site involves His428.

It belongs to the CobB/CobQ family. CobQ subfamily.

It participates in cofactor biosynthesis; adenosylcobalamin biosynthesis. Catalyzes amidations at positions B, D, E, and G on adenosylcobyrinic A,C-diamide. NH(2) groups are provided by glutamine, and one molecule of ATP is hydrogenolyzed for each amidation. The sequence is that of Cobyric acid synthase from Jannaschia sp. (strain CCS1).